A 366-amino-acid chain; its full sequence is Ribosomal RNA large subunit methyltransferase M (366 aa).

Residues S188, 221–224 (CPGG), D240, D260, and D277 each bind S-adenosyl-L-methionine. Residue K306 is the Proton acceptor of the active site.

It belongs to the class I-like SAM-binding methyltransferase superfamily. RNA methyltransferase RlmE family. RlmM subfamily. Monomer.

It localises to the cytoplasm. It catalyses the reaction cytidine(2498) in 23S rRNA + S-adenosyl-L-methionine = 2'-O-methylcytidine(2498) in 23S rRNA + S-adenosyl-L-homocysteine + H(+). Functionally, catalyzes the 2'-O-methylation at nucleotide C2498 in 23S rRNA. The chain is Ribosomal RNA large subunit methyltransferase M from Photorhabdus laumondii subsp. laumondii (strain DSM 15139 / CIP 105565 / TT01) (Photorhabdus luminescens subsp. laumondii).